The primary structure comprises 302 residues: Sulfate adenylyltransferase subunit 2 (302 aa).

This sequence belongs to the PAPS reductase family. CysD subfamily. In terms of assembly, heterodimer composed of CysD, the smaller subunit, and CysN.

It catalyses the reaction sulfate + ATP + H(+) = adenosine 5'-phosphosulfate + diphosphate. Its pathway is sulfur metabolism; hydrogen sulfide biosynthesis; sulfite from sulfate: step 1/3. Functionally, with CysN forms the ATP sulfurylase (ATPS) that catalyzes the adenylation of sulfate producing adenosine 5'-phosphosulfate (APS) and diphosphate, the first enzymatic step in sulfur assimilation pathway. APS synthesis involves the formation of a high-energy phosphoric-sulfuric acid anhydride bond driven by GTP hydrolysis by CysN coupled to ATP hydrolysis by CysD. This is Sulfate adenylyltransferase subunit 2 from Photorhabdus laumondii subsp. laumondii (strain DSM 15139 / CIP 105565 / TT01) (Photorhabdus luminescens subsp. laumondii).